Reading from the N-terminus, the 805-residue chain is Angiotensin-converting enzyme 2 (805 aa).

The first 17 residues, 1 to 17 (MSSSCWLLLSLVAVATA), serve as a signal peptide directing secretion. Over 18 to 740 (QSLIEEKAES…LKPPYEPPVT (723 aa)) the chain is Extracellular. The region spanning 19–607 (SLIEEKAESF…QNRNSTVGWS (589 aa)) is the Peptidase M2 domain. Residues Asn-53, Asn-82, and Asn-90 are each glycosylated (N-linked (GlcNAc...) asparagine). The cysteines at positions 133 and 141 are disulfide-linked. Arg-169 provides a ligand contact to chloride. Substrate is bound at residue Arg-273. Asn-299 is a glycosylation site (N-linked (GlcNAc...) asparagine). Cys-344 and Cys-361 are disulfide-bonded. 345-346 (HP) contributes to the substrate binding site. Residue His-374 coordinates Zn(2+). The Proton acceptor role is filled by Glu-375. The Zn(2+) site is built by His-378 and Glu-402. Asn-432 carries N-linked (GlcNAc...) asparagine glycosylation. Chloride contacts are provided by Trp-477 and Lys-481. The active-site Proton donor is His-505. Tyr-515 contacts substrate. Cys-530 and Cys-542 are joined by a disulfide. 2 N-linked (GlcNAc...) asparagine glycosylation sites follow: Asn-546 and Asn-601. Residues 614 to 805 (ADQSIKVRIS…QNSDDAQTSF (192 aa)) enclose the Collectrin-like domain. Residues 652–659 (REYFSREK) form an essential for cleavage by ADAM17 region. Residues Asn-660 and Asn-690 are each glycosylated (N-linked (GlcNAc...) asparagine). Residues 697–716 (RSEVEEAIRMSRGRINDIFG) are essential for cleavage by TMPRSS11D and TMPRSS2. The helical transmembrane segment at 741–761 (IWLIIFGVVMGTVVVGIVILI) threads the bilayer. The Cytoplasmic portion of the chain corresponds to 762-805 (VTGIKGRKKKNETKREENPYDSMDIGKGESNAGFQNSDDAQTSF). The disordered stretch occupies residues 771–805 (KNETKREENPYDSMDIGKGESNAGFQNSDDAQTSF). Positions 778–786 (ENPYDSMDI) match the LIR motif. Residue Tyr-781 is modified to Phosphotyrosine. The short motif at 781–784 (YDSM) is the Endocytic sorting signal element. Residues 781 to 785 (YDSMD) carry the SH2-binding motif. Ser-783 bears the Phosphoserine mark. A Glycyl lysine isopeptide (Lys-Gly) (interchain with G-Cter in ubiquitin) cross-link involves residue Lys-788. Positions 792–795 (NAGF) match the PTB motif. Residues 793-805 (AGFQNSDDAQTSF) are compositionally biased toward polar residues. The PDZ-binding signature appears at 803-805 (TSF).

The protein belongs to the peptidase M2 family. In terms of assembly, homodimer. Interacts with the catalytically active form of TMPRSS2. Interacts with SLC6A19; this interaction is essential for expression and function of SLC6A19 in intestine. Interacts with ITGA5:ITGB1. Probably interacts (via endocytic sorting signal motif) with AP2M1; the interaction is inhibited by phosphorylation of Tyr-781. Interacts (via PDZ-binding motif) with NHERF1 (via PDZ domains); the interaction may enhance ACE2 membrane residence. Zn(2+) serves as cofactor. It depends on chloride as a cofactor. Post-translationally, glycosylated. Proteolytic cleavage by ADAM17 generates a secreted form. Also cleaved by serine proteases: TMPRSS2, TMPRSS11D and HPN/TMPRSS1. In terms of processing, phosphorylated. Phosphorylation at Tyr-781 probably inhibits interaction with AP2M1 and enables interactions with proteins containing SH2 domains. Post-translationally, ubiquitinated. Ubiquitinated on Lys-788 via 'Lys-48'-linked ubiquitin. 'Lys-48'-linked deubiquitinated by USP50 on the Lys-788; leading to its stabilization. In terms of tissue distribution, expressed in heart, kidney and forebrain. In testis, expression is restricted to Leydig cells. In heart, expressed in endothelial cells from small and large arteries, arterial smooth muscle cells, and myocytes (at protein level). Ubiquitously expressed, with highest levels in ileum, bladder and lung.

The protein resides in the secreted. It localises to the cell membrane. Its subcellular location is the cytoplasm. It is found in the cell projection. The protein localises to the cilium. The protein resides in the apical cell membrane. The catalysed reaction is angiotensin II + H2O = angiotensin-(1-7) + L-phenylalanine. It catalyses the reaction angiotensin I + H2O = angiotensin-(1-9) + L-leucine. The enzyme catalyses bradykinin(1-8) + H2O = bradykinin(1-7) + L-phenylalanine. It carries out the reaction neurotensin + H2O = neurotensin-(1-12) + L-leucine. The catalysed reaction is kinetensin + H2O = kinetensin-(1-8) + L-leucine. It catalyses the reaction dynorphin A-(1-13) + H2O = dynorphin A-(1-12) + L-lysine. The enzyme catalyses apelin-13 + H2O = apelin-12 + L-phenylalanine. It carries out the reaction [Pyr1]apelin-13 + H2O = [Pyr1]apelin-12 + L-phenylalanine. The catalysed reaction is apelin-17 + H2O = apelin-16 + L-phenylalanine. With respect to regulation, activated by chloride and fluoride, but not bromide. Inhibited by MLN-4760, cFP_Leu, and EDTA, but not by the ACE inhibitors linosipril, captopril, enalaprilat. Functionally, essential counter-regulatory carboxypeptidase of the renin-angiotensin hormone system that is a critical regulator of blood volume, systemic vascular resistance, and thus cardiovascular homeostasis. Converts angiotensin I to angiotensin 1-9, a nine-amino acid peptide with anti-hypertrophic effects in cardiomyocytes, and angiotensin II to angiotensin 1-7, which then acts as a beneficial vasodilator and anti-proliferation agent, counterbalancing the actions of the vasoconstrictor angiotensin II. Also removes the C-terminal residue from three other vasoactive peptides, neurotensin, kinetensin, and des-Arg bradykinin, but is not active on bradykinin. Also cleaves other biological peptides, such as apelins, casomorphins and dynorphin A. Plays an important role in amino acid transport by acting as binding partner of amino acid transporter SLC6A19 in intestine, regulating trafficking, expression on the cell surface, and its catalytic activity. This Rattus norvegicus (Rat) protein is Angiotensin-converting enzyme 2 (Ace2).